The primary structure comprises 74 residues: UPF0291 protein lmo0496 (74 aa).

Belongs to the UPF0291 family.

The protein resides in the cytoplasm. This chain is UPF0291 protein lmo0496, found in Listeria monocytogenes serovar 1/2a (strain ATCC BAA-679 / EGD-e).